We begin with the raw amino-acid sequence, 156 residues long: ATP synthase subunit b (156 aa).

A helical transmembrane segment spans residues 7 to 27; the sequence is LIGQTVAFIIFVWFCMKFVWP.

The protein belongs to the ATPase B chain family. In terms of assembly, F-type ATPases have 2 components, F(1) - the catalytic core - and F(0) - the membrane proton channel. F(1) has five subunits: alpha(3), beta(3), gamma(1), delta(1), epsilon(1). F(0) has three main subunits: a(1), b(2) and c(10-14). The alpha and beta chains form an alternating ring which encloses part of the gamma chain. F(1) is attached to F(0) by a central stalk formed by the gamma and epsilon chains, while a peripheral stalk is formed by the delta and b chains.

It localises to the cell inner membrane. F(1)F(0) ATP synthase produces ATP from ADP in the presence of a proton or sodium gradient. F-type ATPases consist of two structural domains, F(1) containing the extramembraneous catalytic core and F(0) containing the membrane proton channel, linked together by a central stalk and a peripheral stalk. During catalysis, ATP synthesis in the catalytic domain of F(1) is coupled via a rotary mechanism of the central stalk subunits to proton translocation. In terms of biological role, component of the F(0) channel, it forms part of the peripheral stalk, linking F(1) to F(0). This Shewanella oneidensis (strain ATCC 700550 / JCM 31522 / CIP 106686 / LMG 19005 / NCIMB 14063 / MR-1) protein is ATP synthase subunit b.